A 1782-amino-acid chain; its full sequence is AF4/FMR2 family member lilli (1782 aa).

14 disordered regions span residues 42–84 (NMED…PSEG), 150–313 (ASSS…PPPE), 434–515 (MPTP…QQQQ), 605–637 (GGSSGSCMGTMSSSSSSNKTPSPTDSNRWNLSR), 691–732 (EKLH…QQRY), 768–820 (GALP…LQIP), 839–891 (KVQP…SNKK), 911–1064 (VAAA…AAAS), 1091–1126 (AGNSSSSSKAKRRYSVGSSSNSSSSSETEEQQQHKQ), 1166–1234 (LPQS…KQGQ), 1296–1327 (ARQHHHQPERLKAQQNGHLSSRSAEGARTPKD), 1386–1420 (LKQELPARRRKRSSSSSSSPYKEKKRKKEKAEQLS), 1450–1484 (QESAANGSPNKLQQQQQQSRLSQSQQQQQQQQQQQ), and 1674–1701 (GNTPSSISPSNSVGSQGSGSNTPPGKIV). Residues 54 to 80 (REKYERQQGIQSDDRETSLFGEPRRLN) are compositionally biased toward basic and acidic residues. Low complexity-rich tracts occupy residues 164–180 (QQQQQQQQQQQHYQQQQ) and 211–260 (PSSS…MSSP). A compositionally biased stretch (pro residues) spans 435–447 (PTPPKASPTPPAI). Thr443 carries the phosphothreonine modification. The segment covering 450-463 (MKTEKNHSLEKQDS) has biased composition (basic and acidic residues). The span at 465 to 475 (LENDLELSESD) shows a compositional bias: acidic residues. Ser472 and Ser474 each carry phosphoserine. 2 stretches are compositionally biased toward low complexity: residues 484-515 (SAGNSSNSSESDSSESGSEASSKGDTQQQQQQ) and 609-622 (GSCMGTMSSSSSSN). The span at 623–634 (KTPSPTDSNRWN) shows a compositional bias: polar residues. Residues 691–701 (EKLHDEPRHVG) show a composition bias toward basic and acidic residues. Composition is skewed to low complexity over residues 714 to 730 (QQQQQQQQQQQQQQQQQ) and 782 to 805 (SDSGSASSGSGSGSSSSDSAGGSS). Over residues 859 to 869 (PRQKKPRKKKM) the composition is skewed to basic residues. Ser878 and Ser879 each carry phosphoserine. Residues 920–932 (KKGRGRPRKQAQQ) constitute a DNA-binding region (a.T hook). Residues 929–972 (QAQQQQQQQQQQLQQSGNLSSASASSSQAKGPTLTAAKKPLAKA) are compositionally biased toward low complexity. Residues Ser949 and Ser951 each carry the phosphoserine modification. Residues 973-982 (SVSNSNSTAP) are compositionally biased toward polar residues. Composition is skewed to low complexity over residues 996-1018 (SNSSSNSNTPTKKPTATFATMAA), 1033-1064 (SSSSSCSSTKSSSSSGSDSETPAAAAAGAAAS), 1105-1116 (SVGSSSNSSSSS), and 1174-1196 (SSSDCSSSSNSDSSSNSSGSSSS). Over residues 1308 to 1318 (AQQNGHLSSRS) the composition is skewed to polar residues. Positions 1450–1460 (QESAANGSPNK) are enriched in polar residues. Ser1457 is modified (phosphoserine). Composition is skewed to low complexity over residues 1461–1484 (LQQQQQQSRLSQSQQQQQQQQQQQ) and 1674–1694 (GNTPSSISPSNSVGSQGSGSN).

This sequence belongs to the AF4 family.

The protein resides in the nucleus. In terms of biological role, has a role in transcriptional regulation. Acts in parallel with the Ras/MAPK and the PI3K/PKB pathways in the control of cell identity and cellular growth. Essential for regulation of the cytoskeleton and cell growth but not for cell proliferation or growth rate. Required specifically for the microtubule-based basal transport of lipid droplets. Plays a partially redundant function downstream of Raf in cell fate specification in the developing eye. Pair-rule protein that regulates embryonic cellularization, gastrulation and segmentation. In Drosophila mojavensis (Fruit fly), this protein is AF4/FMR2 family member lilli.